Reading from the N-terminus, the 105-residue chain is Large ribosomal subunit protein eL36 (105 aa).

It belongs to the eukaryotic ribosomal protein eL36 family. In terms of assembly, component of the large ribosomal subunit.

Its subcellular location is the cytoplasm. It is found in the cytosol. Component of the large ribosomal subunit. The ribosome is a large ribonucleoprotein complex responsible for the synthesis of proteins in the cell. The polypeptide is Large ribosomal subunit protein eL36 (RPL36) (Hydrophis hardwickii (Hardwick's spine-bellied seasnake)).